A 432-amino-acid polypeptide reads, in one-letter code: Dihydroorotase (432 aa).

Zn(2+) contacts are provided by H60 and H62. Substrate is bound by residues 62-64 (HLR) and N94. Residues D152, H179, and H232 each coordinate Zn(2+). N278 provides a ligand contact to substrate. D305 is a Zn(2+) binding site. D305 is a catalytic residue. Substrate contacts are provided by residues H309 and 323–324 (FG).

This sequence belongs to the metallo-dependent hydrolases superfamily. DHOase family. Class I DHOase subfamily. Zn(2+) is required as a cofactor.

It carries out the reaction (S)-dihydroorotate + H2O = N-carbamoyl-L-aspartate + H(+). It functions in the pathway pyrimidine metabolism; UMP biosynthesis via de novo pathway; (S)-dihydroorotate from bicarbonate: step 3/3. In terms of biological role, catalyzes the reversible cyclization of carbamoyl aspartate to dihydroorotate. This Elusimicrobium minutum (strain Pei191) protein is Dihydroorotase.